The chain runs to 187 residues: Elongation factor P (187 aa).

This sequence belongs to the elongation factor P family.

The protein resides in the cytoplasm. It participates in protein biosynthesis; polypeptide chain elongation. Its function is as follows. Involved in peptide bond synthesis. Stimulates efficient translation and peptide-bond synthesis on native or reconstituted 70S ribosomes in vitro. Probably functions indirectly by altering the affinity of the ribosome for aminoacyl-tRNA, thus increasing their reactivity as acceptors for peptidyl transferase. The chain is Elongation factor P from Mycobacterium avium (strain 104).